The primary structure comprises 438 residues: MDQMNYQNKKVLVYGWARSGKAVYQLLKKIGANVYVTADEEPTDLFDDVNFVDDIDESFDLLVKNPGIRYEKEIIKKALNLNIPVITEVQVALDQFKGEVLAVTGSNGKTTTTTLIGKMLKADNVDVKVGGNIGIPVSELMLSDSQPRVLMLELSSFQLLGAQNIKPKIAVITNLFSSHIDFHHTRGNYLRAKFSITQHQTKDDYLVLNDSSIDSKDFAKRSQADDYYFSPTNTSVNTYVNDGTIYFDDEKIIDLSKVVLVGEHNLENILAAVTAAKIFGVSNRAIEKVLTSFKGLEHRLEAVGVIKERTVYNDSKATDIEATQKALASFKEPINLIAGGLDRGDDLNRLVPNFKNVVSLITYGQTKNKLQSAGEKAGIKQTVVVDTLKEAVAKAKELSRPGQVLLFSPAAASWDQFPNFEIRGEEFKKMIKNREGWS.

Residue 105 to 111 participates in ATP binding; sequence GSNGKTT.

The protein belongs to the MurCDEF family.

The protein resides in the cytoplasm. The enzyme catalyses UDP-N-acetyl-alpha-D-muramoyl-L-alanine + D-glutamate + ATP = UDP-N-acetyl-alpha-D-muramoyl-L-alanyl-D-glutamate + ADP + phosphate + H(+). The protein operates within cell wall biogenesis; peptidoglycan biosynthesis. Its function is as follows. Cell wall formation. Catalyzes the addition of glutamate to the nucleotide precursor UDP-N-acetylmuramoyl-L-alanine (UMA). This chain is UDP-N-acetylmuramoylalanine--D-glutamate ligase, found in Oenococcus oeni (strain ATCC BAA-331 / PSU-1).